We begin with the raw amino-acid sequence, 417 residues long: Voltage-gated ClC-type chloride channel ClcB (417 aa).

11 helical membrane-spanning segments follow: residues Leu5 to Ala25, Leu54 to Met74, Leu146 to Gly166, Leu168 to Ile188, Ala190 to Val210, Ala222 to Met242, Trp258 to Trp278, Phe288 to Ala308, Gly316 to Tyr336, Met339 to Met359, and Met380 to Leu400.

Belongs to the chloride channel (TC 2.A.49) family. ClcB subfamily.

It is found in the cell inner membrane. Functionally, probably acts as an electrical shunt for an outwardly-directed proton pump that is linked to amino acid decarboxylation, as part of the extreme acid resistance (XAR) response. The protein is Voltage-gated ClC-type chloride channel ClcB of Citrobacter koseri (strain ATCC BAA-895 / CDC 4225-83 / SGSC4696).